The primary structure comprises 151 residues: Transcriptional regulator MraZ (151 aa).

2 consecutive SpoVT-AbrB domains span residues 5–52 and 81–124; these read ATAV…PLMN and ATEC…SDVE.

It belongs to the MraZ family. As to quaternary structure, forms oligomers.

The protein resides in the cytoplasm. It is found in the nucleoid. The chain is Transcriptional regulator MraZ from Haemophilus influenzae (strain PittGG).